The sequence spans 506 residues: Exoglucanase (506 aa).

A signal peptide spans 1-18 (MFPRSILLALSLTAVALG). The interval 19 to 450 (QQVGTNMAEN…IKFGDINSTF (432 aa)) is catalytic. The active-site Nucleophile is the Glu-227. Glu-232 acts as the Proton donor in catalysis. An N-linked (GlcNAc...) asparagine glycan is attached at Asn-308. The segment at 405 to 426 (ASPSQPGISRGTCSRDSGKPED) is disordered. Residues 406 to 419 (SPSQPGISRGTCSR) show a composition bias toward polar residues. An N-linked (GlcNAc...) asparagine glycan is attached at Asn-447. A disordered region spans residues 449-472 (TFNNNGGGGGNPSPTTTRPNSPAQ). The tract at residues 451–473 (NNNGGGGGNPSPTTTRPNSPAQT) is linker. Residues 460-470 (PSPTTTRPNSP) show a composition bias toward low complexity. One can recognise a CBM1 domain in the interval 470 to 506 (PAQTMWGQCGGQGWTGPTACQSPSTCHVINDFYSQCF). Intrachain disulfides connect Cys-478-Cys-495 and Cys-489-Cys-505.

It belongs to the glycosyl hydrolase 7 (cellulase C) family.

It catalyses the reaction Hydrolysis of (1-&gt;4)-beta-D-glucosidic linkages in cellulose and cellotetraose, releasing cellobiose from the non-reducing ends of the chains.. In terms of biological role, the biological conversion of cellulose to glucose generally requires three types of hydrolytic enzymes: (1) Endoglucanases which cut internal beta-1,4-glucosidic bonds; (2) Exocellobiohydrolases that cut the disaccharide cellobiose from the non-reducing end of the cellulose polymer chain; (3) Beta-1,4-glucosidases which hydrolyze the cellobiose and other short cello-oligosaccharides to glucose. The chain is Exoglucanase (cel2) from Agaricus bisporus (White button mushroom).